The following is a 139-amino-acid chain: Large ribosomal subunit protein uL16 (139 aa).

Residues 1-20 (MLIPRRVKHRKQHHPKRRGM) show a composition bias toward basic residues. A disordered region spans residues 1-22 (MLIPRRVKHRKQHHPKRRGMAK).

It belongs to the universal ribosomal protein uL16 family. Part of the 50S ribosomal subunit.

Functionally, binds 23S rRNA and is also seen to make contacts with the A and possibly P site tRNAs. This is Large ribosomal subunit protein uL16 from Streptomyces coelicolor (strain ATCC BAA-471 / A3(2) / M145).